Here is a 187-residue protein sequence, read N- to C-terminus: Inosine triphosphate pyrophosphatase (187 aa).

Residue 11 to 16 (TSNKNK) participates in ITP binding. E39 contributes to the Mg(2+) binding site. Residues K51, 67–68 (DT), K84, 143–146 (FGWD), K164, and 169–170 (HR) contribute to the ITP site.

The protein belongs to the HAM1 NTPase family. As to quaternary structure, homodimer. Mg(2+) is required as a cofactor. Mn(2+) serves as cofactor.

It localises to the cytoplasm. It is found in the nucleus. The catalysed reaction is ITP + H2O = IMP + diphosphate + H(+). The enzyme catalyses dITP + H2O = dIMP + diphosphate + H(+). It catalyses the reaction XTP + H2O = XMP + diphosphate + H(+). Functionally, pyrophosphatase that hydrolyzes non-canonical purine nucleotides such as inosine triphosphate (ITP), deoxyinosine triphosphate (dITP) or xanthosine 5'-triphosphate (XTP) to their respective monophosphate derivatives. The enzyme does not distinguish between the deoxy- and ribose forms. Probably excludes non-canonical purines from RNA and DNA precursor pools, thus preventing their incorporation into RNA and DNA and avoiding chromosomal lesions. This chain is Inosine triphosphate pyrophosphatase, found in Aspergillus fumigatus (strain ATCC MYA-4609 / CBS 101355 / FGSC A1100 / Af293) (Neosartorya fumigata).